The following is a 116-amino-acid chain: Spexin (116 aa).

The N-terminal stretch at 1–26 (MKGFKSLVVMTLTLFLVFSFMGNCNS) is a signal peptide. Residues 27–35 (APQRLFERR) constitute a propeptide that is removed on maturation. Gln49 carries the glutamine amide modification. 2 propeptides span residues 50–116 (GRRF…LLNW) and 74–116 (PNSQ…LLNW). Basic and acidic residues predominate over residues 53–73 (FLSDQSRRKDLSDRPPLERRS). Residues 53-80 (FLSDQSRRKDLSDRPPLERRSPNSQQLT) form a disordered region.

The protein belongs to the spexin family.

The protein resides in the secreted. Its subcellular location is the extracellular space. It is found in the cytoplasmic vesicle. It localises to the secretory vesicle. Plays a role as a central modulator of cardiovascular and renal function and nociception. Also plays a role in energy metabolism and storage. Inhibits adrenocortical cell proliferation with minor stimulation on corticosteroid release. Its function is as follows. Acts as a ligand for galanin receptors GALR2 and GALR3. Intracerebroventricular administration of the peptide induces an increase in arterial blood pressure, a decrease in both heart rate and renal excretion and delayed natriuresis. Intraventricular administration of the peptide induces antinociceptive activity. Also induces contraction of muscarinic-like stomach smooth muscles. Intraperitoneal administration of the peptide induces a reduction in food consumption and body weight. Inhibits long chain fatty acid uptake into adipocytes. In terms of biological role, intracerebroventricular administration of the peptide induces a decrease in heart rate, but no change in arterial pressure, and an increase in urine flow rate. Intraventricular administration of the peptide induces antinociceptive activity. This is Spexin (SPX) from Bos taurus (Bovine).